The sequence spans 369 residues: Arsenite methyltransferase (369 aa).

Residue S46 is modified to Phosphoserine.

It belongs to the methyltransferase superfamily. Arsenite methyltransferase family.

The protein resides in the cytoplasm. Its subcellular location is the cytosol. It catalyses the reaction arsenic triglutathione + [thioredoxin]-dithiol + S-adenosyl-L-methionine + 2 H2O = methylarsonous acid + [thioredoxin]-disulfide + 3 glutathione + S-adenosyl-L-homocysteine + H(+). It carries out the reaction arsenic triglutathione + 2 [thioredoxin]-dithiol + 2 S-adenosyl-L-methionine + H2O = dimethylarsinous acid + 2 [thioredoxin]-disulfide + 3 glutathione + 2 S-adenosyl-L-homocysteine + 2 H(+). The catalysed reaction is arsenic triglutathione + 3 [thioredoxin]-dithiol + 3 S-adenosyl-L-methionine = trimethylarsine + 3 [thioredoxin]-disulfide + 3 glutathione + 3 S-adenosyl-L-homocysteine + 3 H(+). In terms of biological role, catalyzes the transfer of a methyl group from AdoMet to trivalent arsenicals producing methylated and dimethylated arsenicals. It methylates arsenite to form methylarsonate, Me-AsO(3)H(2), which is reduced by methylarsonate reductase to methylarsonite, Me-As(OH)2. Methylarsonite is also a substrate and it is converted into the much less toxic compound dimethylarsinate (cacodylate), Me(2)As(O)-OH. This chain is Arsenite methyltransferase (As3mt), found in Rattus norvegicus (Rat).